The chain runs to 512 residues: Mesoderm induction early response protein 1 (512 aa).

The segment covering 1–16 (MAEPSVESSSPGGSAT) has biased composition (low complexity). Disordered stretches follow at residues 1–63 (MAEP…REGD) and 75–173 (YGST…EDYI). Ser10 bears the Phosphoserine mark. Residues 17–36 (SDDHEFDPSADMLVHDFDDE) show a composition bias toward basic and acidic residues. Acidic residues-rich tracts occupy residues 37-46 (RTLEEEEMME) and 83-105 (EEDE…DNDD). A compositionally biased stretch (polar residues) spans 129-144 (QSSNDDPSQSVASQDA). Ser141 carries the post-translational modification Phosphoserine. Tyr155 bears the Phosphotyrosine mark. A phosphoserine mark is found at Ser160 and Ser166. Residues 160–173 (SEVEEESEEDEDYI) are compositionally biased toward acidic residues. The region spanning 180 to 278 (KEIMVGSMFQ…EALRRLRFNV (99 aa)) is the ELM2 domain. Residues 180–284 (KEIMVGSMFQ…RFNVKAAREE (105 aa)) are interaction with HDAC1. A Glycyl lysine isopeptide (Lys-Gly) (interchain with G-Cter in SUMO2) cross-link involves residue Lys239. Residues 283–335 (EELSVWTEEECRNFEQGLKAYGKDFHLIQANKVRTRSVGECVAFYYMWKKSER) form the SANT domain. Residues 366-512 (ESESAASSRA…KFEELENTDD (147 aa)) form a disordered region. Ser367, Ser369, and Ser377 each carry phosphoserine. Polar residues predominate over residues 396 to 409 (TVSTANQNGVSSNG). The segment covering 414 to 423 (LNKEEVKVEG) has biased composition (basic and acidic residues). Residue Lys420 forms a Glycyl lysine isopeptide (Lys-Gly) (interchain with G-Cter in SUMO2) linkage. Position 448 is a phosphothreonine (Thr448). Basic and acidic residues predominate over residues 462 to 475 (ARNENDFDEKSERP). The span at 482–494 (NSNGKESPGSSEF) shows a compositional bias: polar residues. A phosphoserine mark is found at Ser483, Ser488, and Ser491.

As to quaternary structure, interacts with HDAC1. Part of a complex containing at least CDYL, MIER1, MIER2, HDAC1 and HDAC2. In terms of tissue distribution, ubiquitously expressed, but at very low levels. However, consistent level of expression are observed in heart, testis, thyroid, ovary and adrenal gland. Transcripts are up-regulated in breast carcinoma cell lines and tumor.

The protein resides in the nucleus. Its subcellular location is the cytoplasm. In terms of biological role, transcriptional repressor regulating the expression of a number of genes including SP1 target genes. Probably functions through recruitment of HDAC1 a histone deacetylase involved in chromatin silencing. The sequence is that of Mesoderm induction early response protein 1 (MIER1) from Homo sapiens (Human).